The primary structure comprises 1202 residues: DNA-directed RNA polymerase subunit beta (1202 aa).

Positions 1154 to 1202 (NMDEDDDEVVNVDALAKYAEEHKADDKKNEEENKSEATSTTTDDKTNQN) are disordered. Over residues 1171–1188 (YAEEHKADDKKNEEENKS) the composition is skewed to basic and acidic residues.

The protein belongs to the RNA polymerase beta chain family. In terms of assembly, the RNAP catalytic core consists of 2 alpha, 1 beta, 1 beta' and 1 omega subunit. When a sigma factor is associated with the core the holoenzyme is formed, which can initiate transcription.

It carries out the reaction RNA(n) + a ribonucleoside 5'-triphosphate = RNA(n+1) + diphosphate. Functionally, DNA-dependent RNA polymerase catalyzes the transcription of DNA into RNA using the four ribonucleoside triphosphates as substrates. This Limosilactobacillus reuteri (strain DSM 20016) (Lactobacillus reuteri) protein is DNA-directed RNA polymerase subunit beta.